The chain runs to 261 residues: 5'-nucleotidase SurE (261 aa).

Positions 18, 19, 50, and 102 each coordinate a divalent metal cation.

The protein belongs to the SurE nucleotidase family. A divalent metal cation serves as cofactor.

The protein resides in the cytoplasm. The catalysed reaction is a ribonucleoside 5'-phosphate + H2O = a ribonucleoside + phosphate. Its function is as follows. Nucleotidase that shows phosphatase activity on nucleoside 5'-monophosphates. The sequence is that of 5'-nucleotidase SurE from Rhodospirillum rubrum (strain ATCC 11170 / ATH 1.1.1 / DSM 467 / LMG 4362 / NCIMB 8255 / S1).